Reading from the N-terminus, the 154-residue chain is Pseudo histidine-containing phosphotransfer protein 6 (154 aa).

Residue Met1 is modified to N-acetylmethionine. The region spanning 41–137 is the HPt domain; sequence SPNFVYDVIN…HYLKNMMHEL (97 aa).

As to quaternary structure, interacts with AHK5.

It is found in the cytoplasm. The protein resides in the cytosol. The protein localises to the nucleus. In terms of biological role, functions as a two-component phosphorelay mediator between cytokinin sensor histidine kinases and response regulators (B-type ARRs). Plays an important role in propagating cytokinin signal transduction. This is Pseudo histidine-containing phosphotransfer protein 6 (AHP6) from Arabidopsis thaliana (Mouse-ear cress).